Here is a 98-residue protein sequence, read N- to C-terminus: NADH-ubiquinone oxidoreductase chain 4L (98 aa).

Helical transmembrane passes span 1-21, 26-46, and 61-81; these read MNLI…GLIF, IINI…LFVL, and LYIL…VVIL.

It belongs to the complex I subunit 4L family.

It is found in the mitochondrion membrane. It carries out the reaction a ubiquinone + NADH + 5 H(+)(in) = a ubiquinol + NAD(+) + 4 H(+)(out). Functionally, core subunit of the mitochondrial membrane respiratory chain NADH dehydrogenase (Complex I) that is believed to belong to the minimal assembly required for catalysis. Complex I functions in the transfer of electrons from NADH to the respiratory chain. The immediate electron acceptor for the enzyme is believed to be ubiquinone. The polypeptide is NADH-ubiquinone oxidoreductase chain 4L (nad4L) (Dictyostelium citrinum (Slime mold)).